The following is a 197-amino-acid chain: Probable molybdenum cofactor guanylyltransferase (197 aa).

Residues leucine 6–glycine 8, lysine 18, aspartate 65, and aspartate 97 contribute to the GTP site. A Mg(2+)-binding site is contributed by aspartate 97.

Belongs to the MobA family. Mg(2+) serves as cofactor.

It localises to the cytoplasm. It carries out the reaction Mo-molybdopterin + GTP + H(+) = Mo-molybdopterin guanine dinucleotide + diphosphate. Its function is as follows. Transfers a GMP moiety from GTP to Mo-molybdopterin (Mo-MPT) cofactor (Moco or molybdenum cofactor) to form Mo-molybdopterin guanine dinucleotide (Mo-MGD) cofactor. The sequence is that of Probable molybdenum cofactor guanylyltransferase from Staphylococcus carnosus (strain TM300).